Reading from the N-terminus, the 382-residue chain is Histidine biosynthesis bifunctional protein HisB (382 aa).

The histidinol-phosphatase stretch occupies residues 1-190; it reads MQKIVFIDRD…EIYEFLRLPA (190 aa). Catalysis depends on Asp8, which acts as the Nucleophile. Mg(2+) is bound by residues Asp8, Asp10, and Asp129. Asp10 acts as the Proton donor in catalysis. The tract at residues 191 to 382 is imidazoleglycerol-phosphate dehydratase; that stretch reads RTALVERNTK…DNLPSTKGVL (192 aa).

This sequence in the N-terminal section; belongs to the histidinol-phosphatase family. In the C-terminal section; belongs to the imidazoleglycerol-phosphate dehydratase family. The cofactor is Mg(2+).

Its subcellular location is the cytoplasm. It catalyses the reaction D-erythro-1-(imidazol-4-yl)glycerol 3-phosphate = 3-(imidazol-4-yl)-2-oxopropyl phosphate + H2O. It carries out the reaction L-histidinol phosphate + H2O = L-histidinol + phosphate. It functions in the pathway amino-acid biosynthesis; L-histidine biosynthesis; L-histidine from 5-phospho-alpha-D-ribose 1-diphosphate: step 6/9. The protein operates within amino-acid biosynthesis; L-histidine biosynthesis; L-histidine from 5-phospho-alpha-D-ribose 1-diphosphate: step 8/9. This Spirosoma linguale (strain ATCC 33905 / DSM 74 / LMG 10896 / Claus 1) protein is Histidine biosynthesis bifunctional protein HisB.